We begin with the raw amino-acid sequence, 313 residues long: DNA-directed RNA polymerase subunit alpha (313 aa).

The tract at residues Met-1–Asn-226 is alpha N-terminal domain (alpha-NTD). Positions Lys-243–Glu-313 are alpha C-terminal domain (alpha-CTD).

Belongs to the RNA polymerase alpha chain family. As to quaternary structure, homodimer. The RNAP catalytic core consists of 2 alpha, 1 beta, 1 beta' and 1 omega subunit. When a sigma factor is associated with the core the holoenzyme is formed, which can initiate transcription.

It carries out the reaction RNA(n) + a ribonucleoside 5'-triphosphate = RNA(n+1) + diphosphate. DNA-dependent RNA polymerase catalyzes the transcription of DNA into RNA using the four ribonucleoside triphosphates as substrates. In Carboxydothermus hydrogenoformans (strain ATCC BAA-161 / DSM 6008 / Z-2901), this protein is DNA-directed RNA polymerase subunit alpha.